A 316-amino-acid chain; its full sequence is Beta-ketoacyl-[acyl-carrier-protein] synthase III (316 aa).

Active-site residues include C112 and H243. The segment at 244–248 is ACP-binding; the sequence is QANIR. N273 is an active-site residue.

This sequence belongs to the thiolase-like superfamily. FabH family. Homodimer.

It is found in the cytoplasm. It catalyses the reaction malonyl-[ACP] + acetyl-CoA + H(+) = 3-oxobutanoyl-[ACP] + CO2 + CoA. It functions in the pathway lipid metabolism; fatty acid biosynthesis. In terms of biological role, catalyzes the condensation reaction of fatty acid synthesis by the addition to an acyl acceptor of two carbons from malonyl-ACP. Catalyzes the first condensation reaction which initiates fatty acid synthesis and may therefore play a role in governing the total rate of fatty acid production. Possesses both acetoacetyl-ACP synthase and acetyl transacylase activities. Its substrate specificity determines the biosynthesis of branched-chain and/or straight-chain of fatty acids. This is Beta-ketoacyl-[acyl-carrier-protein] synthase III from Haemophilus ducreyi (strain 35000HP / ATCC 700724).